Here is a 434-residue protein sequence, read N- to C-terminus: Glutamate-1-semialdehyde 2,1-aminomutase 1 (434 aa).

An N6-(pyridoxal phosphate)lysine modification is found at Lys270.

It belongs to the class-III pyridoxal-phosphate-dependent aminotransferase family. HemL subfamily. Homodimer. Pyridoxal 5'-phosphate is required as a cofactor.

It localises to the cytoplasm. It carries out the reaction (S)-4-amino-5-oxopentanoate = 5-aminolevulinate. The protein operates within porphyrin-containing compound metabolism; protoporphyrin-IX biosynthesis; 5-aminolevulinate from L-glutamyl-tRNA(Glu): step 2/2. This chain is Glutamate-1-semialdehyde 2,1-aminomutase 1, found in Bacillus anthracis (strain A0248).